The primary structure comprises 105 residues: UPF0235 protein RP839 (105 aa).

The protein belongs to the UPF0235 family.

The sequence is that of UPF0235 protein RP839 from Rickettsia prowazekii (strain Madrid E).